Here is a 164-residue protein sequence, read N- to C-terminus: UPF0114 protein Spro_2386 (164 aa).

Transmembrane regions (helical) follow at residues 15-35 (LLAP…IKFF), 53-73 (LVLT…LVMV), and 136-156 (LMWY…MGYL).

It belongs to the UPF0114 family.

The protein localises to the cell membrane. In Serratia proteamaculans (strain 568), this protein is UPF0114 protein Spro_2386.